The following is a 190-amino-acid chain: MKNNQPADAISFIVDVLKKEQVIAYPTEAVFGVGCDPDSETAVKRLLELKQRPMEKGLILIAANFDQLKPYIDDAALTAEQREAVFARWPGPVTFVFPAKPSTPRWLTGRFDSLAVRVTNHPQVIALCEAFGKPLVSTSANLSGLEPCRTAQEVLAQFGDDFPVLHGATGGRQNPSEIRDALTGELFRQG.

In terms of domain architecture, YrdC-like spans 7 to 190 (ADAISFIVDV…ALTGELFRQG (184 aa)).

Belongs to the SUA5 family. TsaC subfamily.

The protein localises to the cytoplasm. It carries out the reaction L-threonine + hydrogencarbonate + ATP = L-threonylcarbamoyladenylate + diphosphate + H2O. Required for the formation of a threonylcarbamoyl group on adenosine at position 37 (t(6)A37) in tRNAs that read codons beginning with adenine. Catalyzes the conversion of L-threonine, HCO(3)(-)/CO(2) and ATP to give threonylcarbamoyl-AMP (TC-AMP) as the acyladenylate intermediate, with the release of diphosphate. This chain is Threonylcarbamoyl-AMP synthase, found in Cronobacter sakazakii (strain ATCC BAA-894) (Enterobacter sakazakii).